A 274-amino-acid chain; its full sequence is Protein RecA (274 aa).

43–50 is a binding site for ATP; it reads GPESSGKT.

This sequence belongs to the RecA family.

Its subcellular location is the cytoplasm. In terms of biological role, can catalyze the hydrolysis of ATP in the presence of single-stranded DNA, the ATP-dependent uptake of single-stranded DNA by duplex DNA, and the ATP-dependent hybridization of homologous single-stranded DNAs. It interacts with LexA causing its activation and leading to its autocatalytic cleavage. This chain is Protein RecA, found in Neisseria pharyngis.